We begin with the raw amino-acid sequence, 101 residues long: Phosphoprotein OPG062 (101 aa).

Residues 51–73 are disordered; sequence PSSPACERRPSSPSRCERMNNPR. Phosphoserine occurs at positions 53 and 62. Positions 56–70 are enriched in basic and acidic residues; it reads CERRPSSPSRCERMN.

The protein belongs to the orthopoxvirus OPG062 family. In terms of assembly, self-associates to form high molecular-weight forms. Interacts with protein OPG157/A30. Interacts with host RICTOR and RPTOR; these interactions disrupt the mTORC1 and mTORC2 crosstalk. In terms of processing, phosphorylated on two serines. While these phosphorylations do not play a role in virion assembly; they are essential for the interaction with host RICTOR and RPTOR.

The protein localises to the virion. Its function is as follows. Plays an essential role in virion assembly and morphogenesis. Also plays a role in the inhibition of host immune response by dysregulating mTOR. Sequesters host RICTOR and RPTOR, thereby disrupting mTORC1 and mTORC2 crosstalk. In turn, blocks the host antiviral response in part through mTOR-dependent degradation of cGAS, the primary poxvirus sensor. In Vaccinia virus (strain Western Reserve) (VACV), this protein is Phosphoprotein OPG062 (OPG062).